Reading from the N-terminus, the 398-residue chain is Elongation factor Tu (398 aa).

Residues 10–207 form the tr-type G domain; that stretch reads KPHVNIGTIG…TADEYIPEPE (198 aa). Residues 19–26 form a G1 region; it reads GHVDHGKT. Residue 19 to 26 coordinates GTP; sequence GHVDHGKT. Thr26 contacts Mg(2+). Residues 63 to 67 are G2; it reads GITIN. Residues 84–87 are G3; it reads DAPG. Residues 84 to 88 and 139 to 142 each bind GTP; these read DAPGH and NKID. Residues 139–142 are G4; the sequence is NKID. The tract at residues 177–179 is G5; sequence SAL.

Belongs to the TRAFAC class translation factor GTPase superfamily. Classic translation factor GTPase family. EF-Tu/EF-1A subfamily. Monomer.

It localises to the cytoplasm. It carries out the reaction GTP + H2O = GDP + phosphate + H(+). Its function is as follows. GTP hydrolase that promotes the GTP-dependent binding of aminoacyl-tRNA to the A-site of ribosomes during protein biosynthesis. This is Elongation factor Tu from Streptococcus uberis (strain ATCC BAA-854 / 0140J).